We begin with the raw amino-acid sequence, 293 residues long: 3-hydroxybutyrate-oligomer hydrolase (293 aa).

The protein belongs to the AB hydrolase superfamily.

The protein resides in the cytoplasm. It catalyses the reaction (3R)-hydroxybutanoate pentamer + H2O = (3R)-hydroxybutanoate tetramer + (R)-3-hydroxybutanoate + H(+). The catalysed reaction is (3R)-hydroxybutanoate tetramer + H2O = (3R)-hydroxybutanoate trimer + (R)-3-hydroxybutanoate + H(+). It carries out the reaction (3R)-hydroxybutanoate trimer + H2O = (3R)-hydroxybutanoate dimer + (R)-3-hydroxybutanoate + H(+). The enzyme catalyses (3R)-hydroxybutanoate dimer + H2O = 2 (R)-3-hydroxybutanoate + H(+). It catalyses the reaction [(3R)-hydroxybutanoate](n) + H2O = [(3R)-hydroxybutanoate](n-1) + (R)-3-hydroxybutanoate + H(+). Functionally, catalyzes the degradation of various 3-hydroxybutyrate (3HB) oligomers at a high specific activity and artificial amorphous poly(3-hydroxybutyrate) (PHB) at a lower specific activity. Hydrolyzes the 3HB pentamer most efficiently than the tetramer, trimer and dimer. Does not hydrolyze native PHB granules and semicrystalline PHB. Participates in the mobilization of PHB along with other hydrolases. In Cupriavidus necator (strain ATCC 17699 / DSM 428 / KCTC 22496 / NCIMB 10442 / H16 / Stanier 337) (Ralstonia eutropha), this protein is 3-hydroxybutyrate-oligomer hydrolase.